A 298-amino-acid polypeptide reads, in one-letter code: Cyanophycinase (298 aa).

Catalysis depends on charge relay system residues Ser-155, Glu-173, and His-197.

It belongs to the peptidase S51 family.

It catalyses the reaction [L-4-(L-arginin-2-N-yl)aspartate](n) + H2O = [L-4-(L-arginin-2-N-yl)aspartate](n-1) + L-4-(L-arginin-2-N-yl)aspartate. In terms of biological role, exopeptidase that catalyzes the hydrolytic cleavage of multi-L-arginyl-poly-L-aspartic acid (cyanophycin; a water-insoluble reserve polymer) into aspartate-arginine dipeptides. In Trichormus variabilis (strain ATCC 29413 / PCC 7937) (Anabaena variabilis), this protein is Cyanophycinase (cphB).